We begin with the raw amino-acid sequence, 448 residues long: MKKTLRFAAVAAGLVASLITVAPSASAQALRAQGASLADEVVAVVNNDVITGRELDQRVGLIARRLQQQKAPVPPTDQLRAQVLNQMVLERIQVQRAKDDGIVVDNATVQATLGRLAQANGMPLDQYKARIEAQGVPWDLFVRDARTELMLSKLREKEVDSKITVSDAEVASYIASQRGPNAGAQQDLRLEHIFVKAPTNAPQADIDAAQKKAEGLLQQALASGTNFERLAKSQSEADDAKKGGDLGFKAPSSLPSDVVDAVSKLRPGEVNPTLIRVPDGFEIVRLVDRRASQNPAASPKIVQTHVRHILLRVGEGKSESQARQQLIDIRRQIEAGGDFEKFARTYSQDGSASQGGDLGWISPGETVPEFERAMNALQDGQVSNPVRTEYGYHLIQVLGRRDAEGSVQQQMDIARQAIGQRKAEQAYSDWLRELRDSSYVQIKLPVGQ.

An N-terminal signal peptide occupies residues 1–27 (MKKTLRFAAVAAGLVASLITVAPSASA). PpiC domains are found at residues 185–288 (QQDL…RLVD) and 301–399 (IVQT…QVLG). The disordered stretch occupies residues 230 to 249 (LAKSQSEADDAKKGGDLGFK).

The protein localises to the periplasm. The enzyme catalyses [protein]-peptidylproline (omega=180) = [protein]-peptidylproline (omega=0). Its function is as follows. Chaperone involved in the correct folding and assembly of outer membrane proteins. Recognizes specific patterns of aromatic residues and the orientation of their side chains, which are found more frequently in integral outer membrane proteins. May act in both early periplasmic and late outer membrane-associated steps of protein maturation. This chain is Chaperone SurA, found in Burkholderia thailandensis (strain ATCC 700388 / DSM 13276 / CCUG 48851 / CIP 106301 / E264).